The sequence spans 1360 residues: MERVRKNFATADNVLEPPHLISMQRISYEEFLQIDRAPEEREDVGLQAILKNIFPINDFNGLCSLEFLKYKFGEPKYTVQECQQRGMSYEIPLKIVVRLITFDVDEETGVQTIRDMKEQEVFLGSLPLMTADGVFVVNGTERVIVSQLQRSPGLFYSHDNGKSHSSGKLLYSARIIPVRGSWIDLEFDIKDVLHVRIDRRRKFPVTTLLKALGYSSEELLREFYPLENVKLSDGKYWVRFVAEHTAGQRLEFDLVNPQDGEILAKKGRKISKALCRKAVEAGIEFIEASSETILGKVLASAITLAGAEEPLYPCNTEITETVLENLAENGINEFETLFMDGVNYSASFSHTLRLDKVITTAEALLEIYRRLRPSSPPTLEIATTFFENLFFNPDLYDLSEVGRYKINAKLGLKTDIEHRALTRDDIIYGVRYLVRLKDNQGGIDDIDHLGNRRVRTVGELVENQYRMGLVRMERAIKERMTLQDVETLMPHDLINPKPISAAIKEFFGTSQLSQFMDQTNALSEVTHKRRLSALGPGGLSRERAGFEVRDVHPTHYGRICPIETPEGPNIGLIVSLATYARVNPYGFIETPYRKVENRVILDDIRYLSALEEQKQIIAPALVALEADHQSISEGNLIAREEGDVITIGSDNVTYMDVAPNQMISVAASLVPFLENDDANRALMGSNMQRQAVPLLVTAAPLVGTGMERYVARDSGACLLSAGDGVVEEVDSNRVVVRYDKPGVDGYDTGVAVYRLTKYKKSNQNTCFTQTPTILPGLKVEKGTLLADGPGCEAGELALGKNLTVAFMPWRGFNYEDSILINERLLKEDAYTSIHIDVFETMARDTKLGKEEITRDIPNVSEDTLRNLDDSGIVRVGAEIKPGDTLVGKVTPKGETVLSPEEKLLRAIFGEKAQDVKDSSLRVPPGVTGVVIDAKVFSRKGVDKDERSLMIEDLEIERLEGDKRDELRSLKNGVCRELGELIAGNTALGDILDSKGELLISSGDKIEVVHAIAIGFHRLKDIDFSGMADCTDRMDAAYERYQKQAEVIAQRYDGIIERQKKGDDLPPGVVKMVKVYVATKRKLSVGDKMAGRHGNKGVVSRILPEEDMPYFANGDTVDIVLNPLGVPSRMNVGQILEVHLGFAAKNLGAQLEKLAEQYAVEEIKAKLSRVYSDSEYHAIIDGKTDAEVIDWAYRHRKGLHMATPVFDGAEEAEIRKLLIESGVDKGGQSQLYDGLTGEPFANLVTVGVMYMLKLHHLVDNKIHARSTGPYSLVTQQPLGGKAQFGGQRLGEMEVWAMEAYGAAYTLKEFLTVKSDDVEGRTTMYERIVKGNNFLTTGLPESFHVLVKELQGLCLNMELIEE.

This sequence belongs to the RNA polymerase beta chain family. In terms of assembly, the RNAP catalytic core consists of 2 alpha, 1 beta, 1 beta' and 1 omega subunit. When a sigma factor is associated with the core the holoenzyme is formed, which can initiate transcription.

The enzyme catalyses RNA(n) + a ribonucleoside 5'-triphosphate = RNA(n+1) + diphosphate. DNA-dependent RNA polymerase catalyzes the transcription of DNA into RNA using the four ribonucleoside triphosphates as substrates. This chain is DNA-directed RNA polymerase subunit beta, found in Desulfotalea psychrophila (strain LSv54 / DSM 12343).